Here is a 214-residue protein sequence, read N- to C-terminus: Calcineurin B homologous protein 3 (214 aa).

The N-myristoyl glycine moiety is linked to residue Gly-2. The EF-hand domain occupies 110–145; it reads CRTDKLRFLFNMYDSDNDNKITLEEYRKVVEELLSG. Positions 123, 125, 127, 129, and 134 each coordinate Ca(2+).

The protein belongs to the calcineurin regulatory subunit family. CHP subfamily. In terms of assembly, monomer. Homodimer.

The protein resides in the nucleus. It localises to the cytoplasm. The protein localises to the membrane. It is found in the cell membrane. Its subcellular location is the cell projection. The protein resides in the lamellipodium. It localises to the ruffle membrane. Functions as an integral cofactor in cell pH regulation by controlling plasma membrane-type Na(+)/H(+) exchange activity. Promotes the induction of hematopoietic stem cell differentiation toward megakaryocytic lineage. Essential for the coupling of ERK cascade activation with the expression of ETS family genes in megakaryocytic differentiation. Also involved in granulocytic differentiation in a ERK-dependent manner. Inhibits the phosphatase activity of calcineurin. This chain is Calcineurin B homologous protein 3, found in Xenopus laevis (African clawed frog).